Consider the following 312-residue polypeptide: Malate dehydrogenase (312 aa).

NAD(+)-binding positions include 7-13 (GAAGGIG) and Asp-34. Substrate-binding residues include Arg-81 and Arg-87. NAD(+) contacts are provided by residues Asn-94 and 117–119 (ITN). Substrate is bound by residues Asn-119 and Arg-153. His-177 acts as the Proton acceptor in catalysis. Met-227 contacts NAD(+).

The protein belongs to the LDH/MDH superfamily. MDH type 1 family. Homodimer.

The enzyme catalyses (S)-malate + NAD(+) = oxaloacetate + NADH + H(+). Catalyzes the reversible oxidation of malate to oxaloacetate. This is Malate dehydrogenase from Salmonella agona (strain SL483).